A 143-amino-acid chain; its full sequence is Nucleoside diphosphate kinase (143 aa).

The ATP site is built by Lys-11, Phe-59, Arg-87, Thr-93, Arg-104, and Asn-114. His-117 functions as the Pros-phosphohistidine intermediate in the catalytic mechanism.

This sequence belongs to the NDK family. In terms of assembly, homotetramer. Requires Mg(2+) as cofactor.

The protein localises to the cytoplasm. The enzyme catalyses a 2'-deoxyribonucleoside 5'-diphosphate + ATP = a 2'-deoxyribonucleoside 5'-triphosphate + ADP. It carries out the reaction a ribonucleoside 5'-diphosphate + ATP = a ribonucleoside 5'-triphosphate + ADP. Its function is as follows. Major role in the synthesis of nucleoside triphosphates other than ATP. The ATP gamma phosphate is transferred to the NDP beta phosphate via a ping-pong mechanism, using a phosphorylated active-site intermediate. In Shewanella sp. (strain W3-18-1), this protein is Nucleoside diphosphate kinase.